The chain runs to 207 residues: Outer-membrane lipoprotein carrier protein (207 aa).

An N-terminal signal peptide occupies residues methionine 1–alanine 21.

Belongs to the LolA family. Monomer.

Its subcellular location is the periplasm. Its function is as follows. Participates in the translocation of lipoproteins from the inner membrane to the outer membrane. Only forms a complex with a lipoprotein if the residue after the N-terminal Cys is not an aspartate (The Asp acts as a targeting signal to indicate that the lipoprotein should stay in the inner membrane). This chain is Outer-membrane lipoprotein carrier protein, found in Pseudomonas putida (strain GB-1).